Consider the following 1009-residue polypeptide: RNA2 polyprotein (1009 aa).

The tract at residues phenylalanine 387–glycine 393 is involved in tubule formation by the movement protein.

In terms of assembly, interacts with the large capsid protein. As to quaternary structure, interacts with the small capsid protein. Homomultimer; assembles as pentons. Interacts with the movement protein (via C-terminus). Interacts (via C-terminus) with the large capsid protein. Post-translationally, specific enzymatic cleavages by picornain 3C-like protease in vivo yield mature proteins.

The protein localises to the host cell junction. Its subcellular location is the host plasmodesma. The protein resides in the virion. Its function is as follows. Responsible for viral RNA2 accumulation. May function by recruiting the RNA1-encoded polyprotein that contains the replication protein to RNA2 and enable its replication. Functionally, transports the viral genome to neighboring plant cells directly through plasmosdesmata, without any budding. The movement protein allows efficient cell to cell propagation, by bypassing the host cell wall barrier. Acts by forming a tubular structure at the host plasmodesmata, enlarging it enough to allow free passage of virion capsids. Binds to GTP and to single-stranded RNA and single-stranded DNA in a non-sequence-specific manner. In terms of biological role, together with the small capsid protein, forms an icosahedral capsid (T=3) enclosing the viral positive strand RNA genome, with a diameter of approximately 300 Angstroms. The capsid is formed from 60 copies each of the large and the small capsid protein. The large capsid protein interacts with the viral RNA. Together with the large capsid protein, forms an icosahedral capsid (T=3) enclosing the viral positive strand RNA genome, with a diameter of approximately 300 Angstroms. The capsid is formed from 60 copies each of the large and the small capsid protein. The small capsid protein forms the turrets at the fivefold axes of the viral particle. This chain is RNA2 polyprotein, found in Squash mosaic virus (strain melon) (SqMV).